A 514-amino-acid chain; its full sequence is 2-isopropylmalate synthase (514 aa).

Residues 5 to 267 (IYIFDTTLRD…HTDIVTEEIT (263 aa)) enclose the Pyruvate carboxyltransferase domain. Residues aspartate 14, histidine 202, histidine 204, and asparagine 238 each contribute to the Mn(2+) site. A regulatory domain region spans residues 392–514 (KLKYYQVFTG…SKDLQKISAN (123 aa)).

It belongs to the alpha-IPM synthase/homocitrate synthase family. LeuA type 1 subfamily. Homodimer. Mn(2+) serves as cofactor.

The protein localises to the cytoplasm. The enzyme catalyses 3-methyl-2-oxobutanoate + acetyl-CoA + H2O = (2S)-2-isopropylmalate + CoA + H(+). It participates in amino-acid biosynthesis; L-leucine biosynthesis; L-leucine from 3-methyl-2-oxobutanoate: step 1/4. Functionally, catalyzes the condensation of the acetyl group of acetyl-CoA with 3-methyl-2-oxobutanoate (2-ketoisovalerate) to form 3-carboxy-3-hydroxy-4-methylpentanoate (2-isopropylmalate). The polypeptide is 2-isopropylmalate synthase (Clostridium kluyveri (strain NBRC 12016)).